We begin with the raw amino-acid sequence, 456 residues long: Equilibrative nucleoside transporter 2 (456 aa).

Residues 13–33 form a helical membrane-spanning segment; the sequence is LVGISFFILGLGTLLPWNFFI. 2 N-linked (GlcNAc...) asparagine glycosylation sites follow: Asn-48 and Asn-57. 5 helical membrane passes run 70–90, 99–119, 124–144, 162–182, and 193–213; these read WVTL…SFLY, ILGS…LVKV, GPFF…SAVL, LFLS…LLSM, and LGYF…YLSL. The N-linked (GlcNAc...) asparagine glycan is linked to Asn-225. The residue at position 252 (Ser-252) is a Phosphoserine. A run of 5 helical transmembrane segments spans residues 291 to 311, 324 to 344, 360 to 380, 386 to 406, and 432 to 452; these read WLTA…FPAI, WSQF…DWLG, LLPL…LCHV, LPIL…FAVS, and ALMT…SFLF.

This sequence belongs to the SLC29A/ENT transporter (TC 2.A.57) family. In terms of processing, glycosylated. In terms of tissue distribution, highly expressed in skeletal muscle. Expressed in liver, lung, placenta, brain, heart, kidney and ovarian tissues. Expressed in testis at the blood-brain-barrier.

It is found in the apical cell membrane. It localises to the basolateral cell membrane. It catalyses the reaction inosine(in) = inosine(out). The enzyme catalyses adenosine(in) = adenosine(out). It carries out the reaction uridine(out) = uridine(in). The catalysed reaction is thymidine(in) = thymidine(out). It catalyses the reaction hypoxanthine(out) = hypoxanthine(in). The enzyme catalyses adenine(out) = adenine(in). It carries out the reaction cytidine(in) = cytidine(out). The catalysed reaction is thymine(out) = thymine(in). It catalyses the reaction uracil(in) = uracil(out). The enzyme catalyses guanine(out) = guanine(in). It carries out the reaction guanosine(in) = guanosine(out). In terms of biological role, bidirectional uniporter involved in the facilitative transport of nucleosides and nucleobases, and contributes to maintaining their cellular homeostasis. Functions as a Na(+)-independent, passive transporter. Involved in the transport of nucleosides such as inosine, adenosine, uridine, thymidine, cytidine and guanosine. Also able to transport purine nucleobases (hypoxanthine, adenine, guanine) and pyrimidine nucleobases (thymine, uracil). Involved in nucleoside transport at basolateral membrane of kidney cells, allowing liver absorption of nucleoside metabolites. Mediates apical nucleoside uptake into Sertoli cells, thereby regulating the transport of nucleosides in testis across the blood-testis-barrier. Mediates both the influx and efflux of hypoxanthine in skeletal muscle microvascular endothelial cells to control the amount of intracellular hypoxanthine available for xanthine oxidase-mediated ROS production. Its function is as follows. Non functional nucleoside transporter protein for adenosine or thymidine transport. Does not express on cell membrane. This chain is Equilibrative nucleoside transporter 2, found in Homo sapiens (Human).